The following is a 130-amino-acid chain: MKSLGRHIIAEFYDCDKEILDNVEKIEQSMKNAAYETGATLVNSSFHRFLPYGVSGVVVISESHLTIHTWPEYGYAAVDLFTCGDDVDPWKAFTYLKEVLKSQRVHVVEHLRGKYDEIGIPENSPHKMEV.

The active-site Schiff-base intermediate with substrate; via pyruvic acid is the S63. Residue S63 is modified to Pyruvic acid (Ser); by autocatalysis. Residue H68 is the Proton acceptor; for processing activity of the active site. C83 serves as the catalytic Proton donor; for catalytic activity.

This sequence belongs to the prokaryotic AdoMetDC family. Type 1 subfamily. As to quaternary structure, heterotetramer of two alpha and two beta chains arranged as a dimer of alpha/beta heterodimers. It depends on pyruvate as a cofactor. In terms of processing, is synthesized initially as an inactive proenzyme. Formation of the active enzyme involves a self-maturation process in which the active site pyruvoyl group is generated from an internal serine residue via an autocatalytic post-translational modification. Two non-identical subunits are generated from the proenzyme in this reaction, and the pyruvate is formed at the N-terminus of the alpha chain, which is derived from the carboxyl end of the proenzyme. The post-translation cleavage follows an unusual pathway, termed non-hydrolytic serinolysis, in which the side chain hydroxyl group of the serine supplies its oxygen atom to form the C-terminus of the beta chain, while the remainder of the serine residue undergoes an oxidative deamination to produce ammonia and the pyruvoyl group blocking the N-terminus of the alpha chain.

The catalysed reaction is S-adenosyl-L-methionine + H(+) = S-adenosyl 3-(methylsulfanyl)propylamine + CO2. It functions in the pathway amine and polyamine biosynthesis; S-adenosylmethioninamine biosynthesis; S-adenosylmethioninamine from S-adenosyl-L-methionine: step 1/1. Functionally, catalyzes the decarboxylation of S-adenosylmethionine to S-adenosylmethioninamine (dcAdoMet), the propylamine donor required for the synthesis of the polyamines spermine and spermidine from the diamine putrescine. The protein is S-adenosylmethionine decarboxylase proenzyme of Thermosipho africanus (strain TCF52B).